The primary structure comprises 776 residues: 3-isopropylmalate dehydratase (776 aa).

Residues cysteine 357, cysteine 418, and cysteine 421 each contribute to the [4Fe-4S] cluster site. Basic and acidic residues predominate over residues 482–493 (SAPKVEVRHDTD). Disordered stretches follow at residues 482–518 (SAPK…SDVA) and 525–544 (DIPV…SADA). Over residues 527–538 (PVSNSSTQSPGS) the composition is skewed to polar residues.

Belongs to the aconitase/IPM isomerase family. Monomer. Requires [4Fe-4S] cluster as cofactor.

It catalyses the reaction (2R,3S)-3-isopropylmalate = (2S)-2-isopropylmalate. Its pathway is amino-acid biosynthesis; L-leucine biosynthesis; L-leucine from 3-methyl-2-oxobutanoate: step 2/4. In terms of biological role, catalyzes the isomerization between 2-isopropylmalate and 3-isopropylmalate, via the formation of 2-isopropylmaleate. This Eremothecium gossypii (strain ATCC 10895 / CBS 109.51 / FGSC 9923 / NRRL Y-1056) (Yeast) protein is 3-isopropylmalate dehydratase (LEU1).